The primary structure comprises 409 residues: F-box/kelch-repeat protein At1g48625 (409 aa).

The F-box domain maps to 2 to 49; sequence ATMISNLPRDLMEEILSRVPLKSMRAVRLTCKNWHTLSITISESLAKM. 2 Kelch repeats span residues 169-218 and 221-266; these read FIDY…LKGN and WCAR…ILSC.

This is F-box/kelch-repeat protein At1g48625 from Arabidopsis thaliana (Mouse-ear cress).